Consider the following 307-residue polypeptide: MSEEFPSPQLIDDLEEHPQHDNARVVKDLLAGTAGGIAQVLVGQPFDTTKVRLQTSSTPTTAMEVVRKLLANEGPRGFYKGTLTPLIGVGACVSLQFGVNEAMKRFFHHRNADMSSTLSLPQYYACGVTGGIVNSFLASPIEHVRIRLQTQTGSGTNAEFKGPLECIKKLRHNKALLRGLTPTILREGHGCGTYFLVYEALIANQMNKRRGLERKDIPAWKLCIFGALSGTALWLMVYPLDVIKSVMQTDNLQKPKFGNSISSVAKTLYANGGIGAFFKGFGPTMLRAAPANGATFATFELAMRLLG.

3 Solcar repeats span residues 26–106, 121–204, and 218–305; these read VKDL…MKRF, PQYY…LIAN, and PAWK…AMRL. 6 consecutive transmembrane segments (helical) span residues 29–49, 83–103, 118–138, 183–203, 223–243, and 277–298; these read LLAG…FDTT, LTPL…NEAM, LSLP…SFLA, TILR…ALIA, CIFG…LDVI, and FFKG…TFAT.

The protein belongs to the mitochondrial carrier (TC 2.A.29) family.

The protein resides in the mitochondrion inner membrane. Its function is as follows. Secondary mitochondrial glycine transporter required for the biosynthesis of heme at high glycine concentrations. Imports the precursor glycine into the mitochondrial matrix, where it is condensed with succinyl-CoA to produce 5-aminolevulinate (ALA), the first step of heme biosynthesis. This chain is Mitochondrial glycine transporter YMC1, found in Saccharomyces cerevisiae (strain ATCC 204508 / S288c) (Baker's yeast).